The primary structure comprises 299 residues: Probable lipid kinase YegS (299 aa).

Residues 2–133 (AEFPASLLIL…IDMAQVNKQT (132 aa)) form the DAGKc domain. ATP contacts are provided by residues T40, 66 to 72 (GDGTINE), and T95. Residues L215, D218, and L220 each contribute to the Mg(2+) site. E271 serves as the catalytic Proton acceptor.

It belongs to the diacylglycerol/lipid kinase family. YegS lipid kinase subfamily. The cofactor is Mg(2+). Ca(2+) serves as cofactor.

The protein localises to the cytoplasm. Its function is as follows. Probably phosphorylates lipids; the in vivo substrate is unknown. This chain is Probable lipid kinase YegS, found in Escherichia coli O9:H4 (strain HS).